We begin with the raw amino-acid sequence, 207 residues long: GTP-binding protein Rheb homolog 1 (207 aa).

The GTP site is built by G25, K26, S27, Y42, T45, N126, D129, and A157. A Mg(2+)-binding site is contributed by S27. An Effector region motif is present at residues 42–50; it reads YESTIEDQH. Residue T45 participates in Mg(2+) binding. A compositionally biased stretch (polar residues) spans 180 to 193; sequence NLSPTERPNGNSPK. The disordered stretch occupies residues 180–207; the sequence is NLSPTERPNGNSPKRNPFKDDGKPCSIS. A compositionally biased stretch (basic and acidic residues) spans 196 to 207; the sequence is PFKDDGKPCSIS. C204 carries the post-translational modification Cysteine methyl ester. C204 carries S-farnesyl cysteine lipidation. A propeptide spans 205-207 (removed in mature form); that stretch reads SIS.

It belongs to the small GTPase superfamily. Rheb family.

The protein localises to the cell membrane. The catalysed reaction is GTP + H2O = GDP + phosphate + H(+). Binds GTP and exhibits intrinsic GTPase activity. The protein is GTP-binding protein Rheb homolog 1 (rheb-1) of Caenorhabditis elegans.